A 154-amino-acid chain; its full sequence is PHA granule-associated protein PhaP (154 aa).

It localises to the cytoplasmic granule. Functionally, polyhydroxyalkanoate (PHA) granule structural protein. Important for PHA granule formation and separation, and for cell growth. The sequence is that of PHA granule-associated protein PhaP (phaP) from Haloferax mediterranei (strain ATCC 33500 / DSM 1411 / JCM 8866 / NBRC 14739 / NCIMB 2177 / R-4) (Halobacterium mediterranei).